Reading from the N-terminus, the 380-residue chain is Succinyl-diaminopimelate desuccinylase (380 aa).

Histidine 69 is a Zn(2+) binding site. Aspartate 71 is a catalytic residue. Aspartate 102 contributes to the Zn(2+) binding site. Glutamate 135 serves as the catalytic Proton acceptor. Zn(2+) is bound by residues glutamate 136, glutamate 164, and histidine 353.

This sequence belongs to the peptidase M20A family. DapE subfamily. In terms of assembly, homodimer. Requires Zn(2+) as cofactor. Co(2+) serves as cofactor.

The enzyme catalyses N-succinyl-(2S,6S)-2,6-diaminopimelate + H2O = (2S,6S)-2,6-diaminopimelate + succinate. It functions in the pathway amino-acid biosynthesis; L-lysine biosynthesis via DAP pathway; LL-2,6-diaminopimelate from (S)-tetrahydrodipicolinate (succinylase route): step 3/3. Functionally, catalyzes the hydrolysis of N-succinyl-L,L-diaminopimelic acid (SDAP), forming succinate and LL-2,6-diaminopimelate (DAP), an intermediate involved in the bacterial biosynthesis of lysine and meso-diaminopimelic acid, an essential component of bacterial cell walls. The protein is Succinyl-diaminopimelate desuccinylase of Cereibacter sphaeroides (strain ATCC 17029 / ATH 2.4.9) (Rhodobacter sphaeroides).